We begin with the raw amino-acid sequence, 647 residues long: Chaperone protein HtpG (647 aa).

An a; substrate-binding region spans residues 1–353; it reads MNAHVEQLEF…AQDMSLNVSR (353 aa). A b region spans residues 354-567; sequence EILQQDRQIK…AFGMTPALAR (214 aa). Positions 568 to 647 are c; it reads IYRASGQEVP…LLAERLARTL (80 aa).

It belongs to the heat shock protein 90 family. In terms of assembly, homodimer.

It is found in the cytoplasm. Functionally, molecular chaperone. Has ATPase activity. The sequence is that of Chaperone protein HtpG from Mycobacterium bovis (strain ATCC BAA-935 / AF2122/97).